Reading from the N-terminus, the 34-residue chain is Cytochrome c oxidase polypeptide 2A (34 aa).

N-formylmethionine is present on Met1. A helical transmembrane segment spans residues 4–34; sequence KPKGALAVILVLTLTILVFWLGVYAVFFARG.

Its subcellular location is the cell membrane. It catalyses the reaction 4 Fe(II)-[cytochrome c] + O2 + 8 H(+)(in) = 4 Fe(III)-[cytochrome c] + 2 H2O + 4 H(+)(out). This is Cytochrome c oxidase polypeptide 2A (cbaD) from Thermus thermophilus (strain ATCC 27634 / DSM 579 / HB8).